The chain runs to 261 residues: Glucose 1-dehydrogenase A (261 aa).

11–35 (VITGGSTGLGRAMAVRFGQEEAKVV) serves as a coordination point for NADP(+). Serine 145 serves as a coordination point for substrate. Residue tyrosine 158 is the Proton acceptor of the active site.

Belongs to the short-chain dehydrogenases/reductases (SDR) family. Homotetramer.

It catalyses the reaction D-glucose + NAD(+) = D-glucono-1,5-lactone + NADH + H(+). The catalysed reaction is D-glucose + NADP(+) = D-glucono-1,5-lactone + NADPH + H(+). The chain is Glucose 1-dehydrogenase A (gdhA) from Priestia megaterium (Bacillus megaterium).